The sequence spans 597 residues: Probable E3 ubiquitin-protein ligase ARI1 (597 aa).

Residues 119–333 are TRIAD supradomain; it reads SQMSCDVCME…IAGHSCGRYQ (215 aa). Cys-123, Cys-126, Cys-140, His-142, Cys-145, Cys-148, Cys-167, Cys-172, Cys-214, Cys-220, Cys-236, Cys-238, Cys-243, Cys-246, His-251, Cys-256, Cys-283, and Cys-286 together coordinate Zn(2+). The segment at 123 to 172 adopts an RING-type 1 zinc-finger fold; that stretch reads CDVCMEDLPGDHMTRMDCGHCFCNNCWTEHFTVQINEGQSKRIRCMAHQC. The segment at 194–256 adopts an IBR-type zinc-finger fold; the sequence is AKFDRYLLES…LCQAHSPCSC (63 aa). Residues 283–311 form an RING-type 2; atypical zinc finger; sequence CPKCYKPVEKNGGCNLVRCICGQCFCWLC. Residue Cys-296 is part of the active site. 6 residues coordinate Zn(2+): Cys-301, Cys-303, Cys-308, Cys-311, His-319, and Cys-329. The segment at 536–575 is disordered; the sequence is FQPLDSGTSGVTSRPEQASGSRSSEDTICSSSQKRPKKEG. Over residues 540–568 the composition is skewed to polar residues; sequence DSGTSGVTSRPEQASGSRSSEDTICSSSQ.

This sequence belongs to the RBR family. Ariadne subfamily. Zn(2+) serves as cofactor. In terms of tissue distribution, ubiquitous.

The enzyme catalyses [E2 ubiquitin-conjugating enzyme]-S-ubiquitinyl-L-cysteine + [acceptor protein]-L-lysine = [E2 ubiquitin-conjugating enzyme]-L-cysteine + [acceptor protein]-N(6)-ubiquitinyl-L-lysine.. The protein operates within protein modification; protein ubiquitination. Might act as an E3 ubiquitin-protein ligase, or as part of E3 complex, which accepts ubiquitin from specific E2 ubiquitin-conjugating enzymes and then transfers it to substrates. The protein is Probable E3 ubiquitin-protein ligase ARI1 (ARI1) of Arabidopsis thaliana (Mouse-ear cress).